A 235-amino-acid polypeptide reads, in one-letter code: Carboxy-S-adenosyl-L-methionine synthase (235 aa).

S-adenosyl-L-methionine contacts are provided by residues Tyr35, Gly60–Ser62, Asp83–Asn84, Asn124, and Arg191.

Belongs to the class I-like SAM-binding methyltransferase superfamily. Cx-SAM synthase family. Homodimer.

It catalyses the reaction prephenate + S-adenosyl-L-methionine = carboxy-S-adenosyl-L-methionine + 3-phenylpyruvate + H2O. Its function is as follows. Catalyzes the conversion of S-adenosyl-L-methionine (SAM) to carboxy-S-adenosyl-L-methionine (Cx-SAM). The sequence is that of Carboxy-S-adenosyl-L-methionine synthase from Campylobacter jejuni subsp. jejuni serotype O:23/36 (strain 81-176).